A 158-amino-acid polypeptide reads, in one-letter code: MRLVVQRVREASVAVDGQAVASIEAGLLVLVGFGAADGSDFAAGKPCRATLEKLLDLRIFPDEAGKLNLSLRETGGGLLLVSQFTLYASCRKGRRPSFSEAAPPQVALGLYNALVEMAGQALPGRVGSGVFGADMDVSLVNWGPVTILLDSADLGGAT.

Residues 143–144 (GP) carry the Gly-cisPro motif, important for rejection of L-amino acids motif.

Belongs to the DTD family. Homodimer.

It localises to the cytoplasm. It catalyses the reaction glycyl-tRNA(Ala) + H2O = tRNA(Ala) + glycine + H(+). It carries out the reaction a D-aminoacyl-tRNA + H2O = a tRNA + a D-alpha-amino acid + H(+). In terms of biological role, an aminoacyl-tRNA editing enzyme that deacylates mischarged D-aminoacyl-tRNAs. Also deacylates mischarged glycyl-tRNA(Ala), protecting cells against glycine mischarging by AlaRS. Acts via tRNA-based rather than protein-based catalysis; rejects L-amino acids rather than detecting D-amino acids in the active site. By recycling D-aminoacyl-tRNA to D-amino acids and free tRNA molecules, this enzyme counteracts the toxicity associated with the formation of D-aminoacyl-tRNA entities in vivo and helps enforce protein L-homochirality. This is D-aminoacyl-tRNA deacylase from Solidesulfovibrio magneticus (strain ATCC 700980 / DSM 13731 / RS-1) (Desulfovibrio magneticus).